Here is a 92-residue protein sequence, read N- to C-terminus: Cyclic pyranopterin monophosphate synthase (92 aa).

80–82 is a substrate binding site; it reads LCH.

It belongs to the MoaC family. Homohexamer; trimer of dimers.

It catalyses the reaction (8S)-3',8-cyclo-7,8-dihydroguanosine 5'-triphosphate = cyclic pyranopterin phosphate + diphosphate. It participates in cofactor biosynthesis; molybdopterin biosynthesis. Its function is as follows. Catalyzes the conversion of (8S)-3',8-cyclo-7,8-dihydroguanosine 5'-triphosphate to cyclic pyranopterin monophosphate (cPMP). The chain is Cyclic pyranopterin monophosphate synthase (moaC) from Azospirillum brasilense.